Reading from the N-terminus, the 557-residue chain is Fanconi anemia group C protein homolog (557 aa).

In terms of assembly, belongs to the multisubunit FA complex composed of FANCA, FANCB, FANCC, FANCE, FANCF, FANCG, FANCL/PHF9 and FANCM. This complex may also include HSP70. Interacts with ZBTB32. Upon IFNG induction, interacts with STAT1. Interacts with CDK1. Interacts with EIF2AK2.

Its subcellular location is the nucleus. The protein resides in the cytoplasm. Its function is as follows. DNA repair protein that may operate in a postreplication repair or a cell cycle checkpoint function. May be implicated in interstrand DNA cross-link repair and in the maintenance of normal chromosome stability. Upon IFNG induction, may facilitate STAT1 activation by recruiting STAT1 to IFNGR1. The protein is Fanconi anemia group C protein homolog (Fancc) of Rattus norvegicus (Rat).